The following is a 306-amino-acid chain: Acetaldehyde dehydrogenase 3 (306 aa).

The active-site Acyl-thioester intermediate is Cys131. Residues 162-170 (SVGPGTRKN) and Asn273 contribute to the NAD(+) site.

Belongs to the acetaldehyde dehydrogenase family.

It catalyses the reaction acetaldehyde + NAD(+) + CoA = acetyl-CoA + NADH + H(+). The protein is Acetaldehyde dehydrogenase 3 of Burkholderia lata (strain ATCC 17760 / DSM 23089 / LMG 22485 / NCIMB 9086 / R18194 / 383).